The chain runs to 142 residues: Hemoglobin subunit alpha (142 aa).

An N-acetylserine modification is found at S1. Positions 1 to 142 (SLSDKDKAAV…VALALAERYR (142 aa)) constitute a Globin domain. Residue H59 participates in O2 binding. H88 serves as a coordination point for heme b.

The protein belongs to the globin family. As to quaternary structure, hb1 is a heterotetramer of two alpha chains and two beta-1 chains, while Hb2 is a heterotetramer of two alpha chains and two beta-2 chains. In terms of tissue distribution, red blood cells.

Its function is as follows. Involved in oxygen transport from gills to the various peripheral tissues. This Cygnodraco mawsoni (Antarctic dragonfish) protein is Hemoglobin subunit alpha (hba).